A 638-amino-acid polypeptide reads, in one-letter code: LIM domain kinase 2 (638 aa).

2 consecutive LIM zinc-binding domains span residues 12–63 (CPGC…CPKD) and 72–124 (CHGC…CGKC). A PDZ domain is found at 152 to 239 (LISMPATTEG…TLQLLIEHDP (88 aa)). A Phosphothreonine modification is found at Thr-210. The segment at 279–304 (LRRRSLRRSNSISKSPGPSSPKEPLL) is disordered. Low complexity predominate over residues 286–302 (RSNSISKSPGPSSPKEP). Phosphoserine is present on residues Ser-293 and Ser-298. The Protein kinase domain maps to 331-608 (LIHGEVLGKG…DSFEALSLYL (278 aa)). ATP is bound by residues 337–345 (LGKGFFGQA) and Lys-360. The active site involves Asp-451. Residue Thr-505 is modified to Phosphothreonine; by ROCK1 and CDC42BP.

It belongs to the protein kinase superfamily. TKL Ser/Thr protein kinase family. In terms of assembly, interacts with LIMK2b. Interacts with LIMK2a. As to quaternary structure, binds ROCK1 and MARF1. Interacts with NISCH. Post-translationally, phosphorylated on serine and/or threonine residues by ROCK1.

It is found in the cytoplasm. Its subcellular location is the cytoskeleton. It localises to the spindle. The protein resides in the microtubule organizing center. The protein localises to the centrosome. It is found in the nucleus. Its subcellular location is the perinuclear region. It carries out the reaction L-seryl-[protein] + ATP = O-phospho-L-seryl-[protein] + ADP + H(+). The enzyme catalyses L-threonyl-[protein] + ATP = O-phospho-L-threonyl-[protein] + ADP + H(+). Functionally, serine/threonine-protein kinase that plays an essential role in the regulation of actin filament dynamics. Acts downstream of several Rho family GTPase signal transduction pathways. Involved in astral microtubule organization and mitotic spindle orientation during early stages of mitosis by mediating phosphorylation of TPPP. Displays serine/threonine-specific phosphorylation of myelin basic protein and histone (MBP) in vitro. Suppresses ciliogenesis via multiple pathways; phosphorylation of CFL1, suppression of directional trafficking of ciliary vesicles to the ciliary base, and by facilitating YAP1 nuclear localization where it acts as a transcriptional corepressor of the TEAD4 target genes AURKA and PLK1. This chain is LIM domain kinase 2 (LIMK2), found in Homo sapiens (Human).